The chain runs to 206 residues: Guanylate kinase (206 aa).

Positions 13-193 (PLLLVVSGPS…AVSEIMSIIS (181 aa)) constitute a Guanylate kinase-like domain. Position 20-27 (20-27 (GPSGVGKD)) interacts with ATP.

The protein belongs to the guanylate kinase family.

The protein resides in the cytoplasm. The enzyme catalyses GMP + ATP = GDP + ADP. In terms of biological role, essential for recycling GMP and indirectly, cGMP. The protein is Guanylate kinase of Dehalococcoides mccartyi (strain ATCC BAA-2266 / KCTC 15142 / 195) (Dehalococcoides ethenogenes (strain 195)).